The following is a 1281-amino-acid chain: Zinc finger transcription factor Trps1 (1281 aa).

Residues 1–198 (MVRKKNPPLR…VPSDGGVRLN (198 aa)) form a disordered region. A Glycyl lysine isopeptide (Lys-Gly) (interchain with G-Cter in SUMO2) cross-link involves residue lysine 29. Polar residues predominate over residues 40–49 (DQMSENTDQS). Residues 53–63 (ELNHKEEHSLH) show a composition bias toward basic and acidic residues. A Glycyl lysine isopeptide (Lys-Gly) (interchain with G-Cter in SUMO2) cross-link involves residue lysine 76. Phosphoserine occurs at positions 90 and 127. The segment covering 148 to 162 (LETKEDQKMSPKATE) has biased composition (basic and acidic residues). The span at 163–189 (ETGQAQSGQANCQGLSPVSVASKNPQV) shows a compositional bias: polar residues. Phosphoserine occurs at positions 178 and 216. Residues 222–247 (FKCNICGYGYYGNDPTDLIKHFRKYH) form a C2H2-type 1; atypical zinc finger. Lysine 263 participates in a covalent cross-link: Glycyl lysine isopeptide (Lys-Gly) (interchain with G-Cter in SUMO2). The C2H2-type 2; atypical zinc finger occupies 333-358 (FRCKFCNFTYMGNSSTELEQHFLQTH). Residues 365–394 (SLPSSEVAKPSEKNSNKSIPALQSSDSGDL) form a disordered region. A compositionally biased stretch (polar residues) spans 380–391 (NKSIPALQSSDS). Glycyl lysine isopeptide (Lys-Gly) (interchain with G-Cter in SUMO2) cross-links involve residues lysine 418, lysine 457, lysine 474, and lysine 488. A disordered region spans residues 483 to 512 (QNDLAKSSEGETMTKTDKSSSGAKKKDFSS). A compositionally biased stretch (basic and acidic residues) spans 488-512 (KSSEGETMTKTDKSSSGAKKKDFSS). A C2H2-type 3; atypical zinc finger spans residues 614–637 (HQCHQCSFTTPDVDVLLFHYESVH). A mediates interaction with GLI3 region spans residues 635–819 (SVHESQASDV…SLGLLTPVSG (185 aa)). Residue lysine 645 forms a Glycyl lysine isopeptide (Lys-Gly) (interchain with G-Cter in SUMO2) linkage. 2 consecutive C2H2-type zinc fingers follow at residues 666-689 (HSCT…RRAH) and 692-715 (YKCR…NTVH). A Glycyl lysine isopeptide (Lys-Gly) (interchain with G-Cter in SUMO2) cross-link involves residue lysine 737. Threonine 751 is modified (phosphothreonine). A Glycyl lysine isopeptide (Lys-Gly) (interchain with G-Cter in SUMO2) cross-link involves residue lysine 755. Residue lysine 766 forms a Glycyl lysine isopeptide (Lys-Gly) (interchain with G-Cter in SUMO1); alternate linkage. A Glycyl lysine isopeptide (Lys-Gly) (interchain with G-Cter in SUMO2); alternate cross-link involves residue lysine 766. Glycyl lysine isopeptide (Lys-Gly) (interchain with G-Cter in SUMO2) cross-links involve residues lysine 825, lysine 850, lysine 877, and lysine 879. Residues 856 to 887 (APAGGEKSGALPQQYPASGENKSKDESQSLLR) are disordered. The GATA-type zinc-finger motif lies at 896-920 (CANCLTTKTSLWRKNANGGYVCNAC). Glycyl lysine isopeptide (Lys-Gly) (interchain with G-Cter in SUMO2) cross-links involve residues lysine 925, lysine 937, and lysine 965. Positions 961–977 (EQLNKQQRGSNEEQVNG) are enriched in polar residues. The segment at 961 to 1000 (EQLNKQQRGSNEEQVNGSPLERRSEDHLTESHQREIPLPS) is disordered. Phosphoserine is present on serine 978. The segment covering 980 to 995 (LERRSEDHLTESHQRE) has biased composition (basic and acidic residues). Residues 985–1184 (EDHLTESHQR…PTANGASKEK (200 aa)) are mediates interaction with RNF4. Residues lysine 1003, lysine 1012, lysine 1030, and lysine 1040 each participate in a glycyl lysine isopeptide (Lys-Gly) (interchain with G-Cter in SUMO2) cross-link. Residues 1039–1080 (IKSPQESTGDPGNSSSVSEGKGSSERGSPIEKYMRPAKHPNY) form a disordered region. Polar residues predominate over residues 1040–1049 (KSPQESTGDP). At serine 1041 the chain carries Phosphoserine. The span at 1050-1059 (GNSSSVSEGK) shows a compositional bias: low complexity. Over residues 1060–1072 (GSSERGSPIEKYM) the composition is skewed to basic and acidic residues. Serine 1066 carries the post-translational modification Phosphoserine. Lysine 1070 is covalently cross-linked (Glycyl lysine isopeptide (Lys-Gly) (interchain with G-Cter in SUMO2)). The residue at position 1085 (serine 1085) is a Phosphoserine. Positions 1163-1281 (PLDLAIKHSR…QVEKNGKPKE (119 aa)) are transcriptional repressor domain. The interval 1168–1196 (IKHSRPGPTANGASKEKTKAPPNVKNEGP) is disordered. Glycyl lysine isopeptide (Lys-Gly) (interchain with G-Cter in SUMO2); alternate cross-links involve residues lysine 1192 and lysine 1201. Glycyl lysine isopeptide (Lys-Gly) (interchain with G-Cter in SUMO); alternate cross-links involve residues lysine 1192 and lysine 1201. Residue lysine 1201 forms a Glycyl lysine isopeptide (Lys-Gly) (interchain with G-Cter in SUMO1); alternate linkage. C2H2-type zinc fingers lie at residues 1215-1237 (TKCV…MSCH) and 1243-1267 (FQCS…RGLH).

In terms of assembly, interacts with RNF4; regulates TRPS1 repressor activity. Interacts specifically with the activator form of GLI3 (GLI3A) but not with the repressor form (GLI3R). In terms of processing, sumoylated. Sumoylation in the repressor domain inhibits the transcription repression activity. Sumoylation on Lys-1201 is the major site. Appears to be sumoylated on multiple sites. As to expression, ubiquitously expressed in the adult. Found in fetal brain, lung, kidney, liver, spleen and thymus. More highly expressed in androgen-dependent than in androgen-independent prostate cancer cells.

It is found in the nucleus. Transcriptional repressor. Binds specifically to GATA sequences and represses expression of GATA-regulated genes at selected sites and stages in vertebrate development. Regulates chondrocyte proliferation and differentiation. Executes multiple functions in proliferating chondrocytes, expanding the region of distal chondrocytes, activating proliferation in columnar cells and supporting the differentiation of columnar into hypertrophic chondrocytes. This Homo sapiens (Human) protein is Zinc finger transcription factor Trps1 (TRPS1).